Consider the following 200-residue polypeptide: Formate dehydrogenase iron-sulfur subunit (200 aa).

4Fe-4S ferredoxin-type domains lie at 7 to 37 (VKFYCDEARCIDCHGCDVACKEAHHLPVGVN), 50 to 81 (GKEKSLSIACMHCSDAPCAQVCPVDCFYVRAD), and 82 to 111 (GIVLHDKEKCIGCGYCLYACPFGAPQFPKS). Positions 16, 19, 22, 26, 59, 62, 67, 71, 91, 94, 97, 101, 123, 126, 155, and 159 each coordinate [4Fe-4S] cluster.

Formate dehydrogenase is a membrane-bound complex, formed of at least three different subunits. It depends on [4Fe-4S] cluster as a cofactor.

In terms of biological role, this chain is an electron transfer unit containing 18 cysteine residues, 16 of which occur in four clusters. The protein is Formate dehydrogenase iron-sulfur subunit (fdhB1) of Wolinella succinogenes (strain ATCC 29543 / DSM 1740 / CCUG 13145 / JCM 31913 / LMG 7466 / NCTC 11488 / FDC 602W) (Vibrio succinogenes).